A 339-amino-acid chain; its full sequence is Polyhydroxybutyrate depolymerase (339 aa).

A signal peptide spans 1–20 (MFDSVKIAWLVALGAAQVAA). The active site involves Ser-39. A disulfide bridge connects residues Cys-70 and Cys-79. Asp-121 is an active-site residue. Asn-144 carries an N-linked (GlcNAc...) asparagine glycan. The active site involves His-155. 3 cysteine pairs are disulfide-bonded: Cys-169–Cys-180, Cys-234–Cys-241, and Cys-250–Cys-304. Trp-307 is a binding site for (3R)-hydroxybutanoate trimer.

The protein belongs to the carbohydrate esterase 1 (CE1) family.

It is found in the secreted. It catalyses the reaction [(3R)-hydroxybutanoate](n) + H2O = [(3R)-hydroxybutanoate](n-1) + (R)-3-hydroxybutanoate + H(+). With respect to regulation, the enzyme is completely inhibited by dithiothreitol (DTT) and diisopropylfluorophosphate (DFP), and partially inhibited by HgCl(2) and by enzyme3-(p-nitrophenoxy)propane (EPNP). Activity is not affected by N-ethylmaleimide (NEM) or phenylmethylsulfonyl fluoride (PMSF). Its function is as follows. Esterase involved in the hydrolysis of polyhydroxybutyrate, a microbial polyester that can be produced from renewable resources. This Talaromyces funiculosus (Fruitlet core rot fungus) protein is Polyhydroxybutyrate depolymerase.